The primary structure comprises 457 residues: tRNA-2-methylthio-N(6)-dimethylallyladenosine synthase (457 aa).

An MTTase N-terminal domain is found at 3–120; the sequence is KKVYVKTFGC…LPQMIDARRE (118 aa). The [4Fe-4S] cluster site is built by cysteine 12, cysteine 49, cysteine 83, cysteine 157, cysteine 161, and cysteine 164. Residues 143–377 enclose the Radical SAM core domain; that stretch reads RVEGPSAFVS…QATIEENVAR (235 aa). A TRAM domain is found at 380 to 447; sequence QSMLGKVERI…PHSLRGELVL (68 aa).

This sequence belongs to the methylthiotransferase family. MiaB subfamily. In terms of assembly, monomer. The cofactor is [4Fe-4S] cluster.

The protein resides in the cytoplasm. The catalysed reaction is N(6)-dimethylallyladenosine(37) in tRNA + (sulfur carrier)-SH + AH2 + 2 S-adenosyl-L-methionine = 2-methylsulfanyl-N(6)-dimethylallyladenosine(37) in tRNA + (sulfur carrier)-H + 5'-deoxyadenosine + L-methionine + A + S-adenosyl-L-homocysteine + 2 H(+). In terms of biological role, catalyzes the methylthiolation of N6-(dimethylallyl)adenosine (i(6)A), leading to the formation of 2-methylthio-N6-(dimethylallyl)adenosine (ms(2)i(6)A) at position 37 in tRNAs that read codons beginning with uridine. The polypeptide is tRNA-2-methylthio-N(6)-dimethylallyladenosine synthase (Burkholderia thailandensis (strain ATCC 700388 / DSM 13276 / CCUG 48851 / CIP 106301 / E264)).